We begin with the raw amino-acid sequence, 432 residues long: Tryptophan--tRNA ligase (432 aa).

ATP-binding positions include 13 to 15 (TTS) and 21 to 22 (GN). A 'HIGH' region motif is present at residues 14–22 (TSGTPHLGN). Asp146 contacts L-tryptophan. Residues 158–160 (GRD), Leu198, and 205–209 (KMSKS) contribute to the ATP site. A 'KMSKS' region motif is present at residues 205-209 (KMSKS).

This sequence belongs to the class-I aminoacyl-tRNA synthetase family. Homodimer.

The protein resides in the cytoplasm. It catalyses the reaction tRNA(Trp) + L-tryptophan + ATP = L-tryptophyl-tRNA(Trp) + AMP + diphosphate + H(+). Its function is as follows. Catalyzes the attachment of tryptophan to tRNA(Trp). The chain is Tryptophan--tRNA ligase from Xanthomonas axonopodis pv. citri (strain 306).